A 278-amino-acid polypeptide reads, in one-letter code: Biotin synthase (278 aa).

The region spanning 1 to 227 is the Radical SAM core domain; sequence MQIMLCAISN…QSVVMVAGGR (227 aa). Positions 16, 20, and 23 each coordinate [4Fe-4S] cluster. [2Fe-2S] cluster contacts are provided by C60, C95, and C153.

The protein belongs to the radical SAM superfamily. Biotin synthase family. As to quaternary structure, homodimer. The cofactor is [4Fe-4S] cluster. Requires [2Fe-2S] cluster as cofactor.

The catalysed reaction is (4R,5S)-dethiobiotin + (sulfur carrier)-SH + 2 reduced [2Fe-2S]-[ferredoxin] + 2 S-adenosyl-L-methionine = (sulfur carrier)-H + biotin + 2 5'-deoxyadenosine + 2 L-methionine + 2 oxidized [2Fe-2S]-[ferredoxin]. The protein operates within cofactor biosynthesis; biotin biosynthesis; biotin from 7,8-diaminononanoate: step 2/2. Functionally, catalyzes the conversion of dethiobiotin (DTB) to biotin by the insertion of a sulfur atom into dethiobiotin via a radical-based mechanism. This chain is Biotin synthase, found in Campylobacter jejuni subsp. jejuni serotype O:23/36 (strain 81-176).